The primary structure comprises 58 residues: U7-ctenitoxin-Pr1a (58 aa).

Cystine bridges form between Cys2–Cys16, Cys9–Cys22, Cys13–Cys48, Cys15–Cys40, Cys18–Cys55, and Cys24–Cys38.

As to expression, expressed by the venom gland.

The protein resides in the secreted. Functionally, probable neurotoxin. The chain is U7-ctenitoxin-Pr1a from Phoneutria reidyi (Brazilian Amazonian armed spider).